The sequence spans 306 residues: MSTLGHQYDNSLVSNAFGFLRLPMNFQPYDSDADWVITGVPFDMATSGRAGGRHGPAAIRQVSTNLAWEHNRFPWNFDMRERLNVVDCGDLVYAFGDAREMSEKLQAHAEKLLAAGKRMLSFGGDHFVTLPLLRAHAKHFGKMALVHFDAHTDTYANGCEFDHGTMFYTAPNEGLIDPNHSVQIGIRTEFDKDNGFTVLDAGQVNDRGVDDIIAQVKQIVGDMPVYLTFDIDCLDPAFAPGTGTPVIGGLTSDRAIKLVRGLKDLNIVGMDVVEVAPAYDQSEITALAAATLALEMLYIQAAKKGE.

Mn(2+) is bound by residues His-126, Asp-149, His-151, Asp-153, Asp-230, and Asp-232.

The protein belongs to the arginase family. Agmatinase subfamily. The cofactor is Mn(2+).

It carries out the reaction agmatine + H2O = urea + putrescine. Its pathway is amine and polyamine biosynthesis; putrescine biosynthesis via agmatine pathway; putrescine from agmatine: step 1/1. In terms of biological role, catalyzes the formation of putrescine from agmatine. The protein is Agmatinase of Enterobacter sp. (strain 638).